The following is a 203-amino-acid chain: Cytochrome c oxidase assembly protein CtaG (203 aa).

The Cytoplasmic segment spans residues 1–16 (MADQQEKDQKLKKQQR). The helical; Signal-anchor for type II membrane protein transmembrane segment at 17–39 (SNATIAFACLSFFVCMIGAAYAS) threads the bilayer. The Periplasmic segment spans residues 40-203 (VPLYRIFCQV…VKAETPTNGS (164 aa)).

This sequence belongs to the COX11/CtaG family.

It localises to the cell inner membrane. Its function is as follows. Exerts its effect at some terminal stage of cytochrome c oxidase synthesis, probably by being involved in the insertion of the copper B into subunit I. The chain is Cytochrome c oxidase assembly protein CtaG from Brucella anthropi (strain ATCC 49188 / DSM 6882 / CCUG 24695 / JCM 21032 / LMG 3331 / NBRC 15819 / NCTC 12168 / Alc 37) (Ochrobactrum anthropi).